The primary structure comprises 106 residues: UPF0145 protein Daci_3728 (106 aa).

This sequence belongs to the UPF0145 family.

This is UPF0145 protein Daci_3728 from Delftia acidovorans (strain DSM 14801 / SPH-1).